A 435-amino-acid chain; its full sequence is Evolutionarily conserved signaling intermediate in Toll pathway, mitochondrial (435 aa).

Residues 1-48 constitute a mitochondrion transit peptide; it reads MSWVQVNLLVRSLSRGWGGLCRPALSGTPFAQVSLQALRGLHCSAATH. Lysine 372 is covalently cross-linked (Glycyl lysine isopeptide (Lys-Gly) (interchain with G-Cter in ubiquitin)). The tract at residues 401–435 is disordered; sequence LTTSRLEGQSPPHSPPKGPEEDDETIQAEQQQGQS.

The protein belongs to the ECSIT family. Interacts with MAP3K1, SMAD4 and TRAF6. Interacts with SMAD1 only after BMP4-treatment. Part of the mitochondrial complex I assembly/MCIA complex that comprises at least the core subunits TMEM126B, NDUFAF1, ECSIT and ACAD9 and complement subunits such as COA1 and TMEM186. Interacts with NDUFAF1. Interacts with ACAD9. Interacts with TRIM59. Interacts with TMEM70 and TMEM242. Interacts (when ubiquitinated) with NF-kappa-B subunits RELA and NFKB1. Interacts with RIGI, IFIT1 and MAVS; these interactions promote RLR-mediated type I IFN induction. Interacts with SQSTM1; this interaction inhibits TLR4 signaling via functional regulation of the TRAF6-ECSIT complex. Interacts with cereblon/CRBN; this interaction inhibits the ubiquitination of ECSIT. Post-translationally, ubiquitinated on Lys-372; leading to translocation in the nucleus together with RELA and NFKB1 and expression of NF-kappa-B-dependent genes. Detected in heart, brain, lung, liver, skeletal muscle, kidney and testis. Detected in embryonic mesoderm and epiblast, and in extraembryonic ectoderm.

The protein resides in the cytoplasm. It is found in the nucleus. The protein localises to the mitochondrion. In terms of biological role, adapter protein that plays a role in different signaling pathways including TLRs and IL-1 pathways or innate antiviral induction signaling. Plays a role in the activation of NF-kappa-B by forming a signal complex with TRAF6 and TAK1/MAP3K7 to activate TAK1/MAP3K7 leading to activation of IKKs. Once ubiquitinated, interacts with the dissociated RELA and NFKB1 proteins and translocates to the nucleus where it induces NF-kappa-B-dependent gene expression. Plays a role in innate antiviral immune response by bridging the pattern recognition receptors RIGI and MDA5/IFIT1 to the MAVS complex at the mitochondrion. Promotes proteolytic activation of MAP3K1. Involved in the BMP signaling pathway. Required for normal embryonic development. Functionally, as part of the MCIA complex, involved in the assembly of the mitochondrial complex I. The protein is Evolutionarily conserved signaling intermediate in Toll pathway, mitochondrial of Mus musculus (Mouse).